Consider the following 214-residue polypeptide: Adenylate kinase (214 aa).

Residue 10-15 (GAGKGT) coordinates ATP. The tract at residues 30–59 (STGDMLRAAIKAGTELGKQAKAVIDAGQLV) is NMP. AMP-binding positions include threonine 31, arginine 36, 57–59 (QLV), 85–88 (GFPR), and glutamine 92. The LID stretch occupies residues 122–159 (GRRAHLPSGRTYHVVYNPPKVEGKDDVTGEDLVVRDDD). Residues arginine 123 and 132–133 (TY) each bind ATP. Residues arginine 156 and arginine 167 each coordinate AMP. Lysine 200 provides a ligand contact to ATP.

It belongs to the adenylate kinase family. As to quaternary structure, monomer.

The protein localises to the cytoplasm. It catalyses the reaction AMP + ATP = 2 ADP. The protein operates within purine metabolism; AMP biosynthesis via salvage pathway; AMP from ADP: step 1/1. In terms of biological role, catalyzes the reversible transfer of the terminal phosphate group between ATP and AMP. Plays an important role in cellular energy homeostasis and in adenine nucleotide metabolism. The polypeptide is Adenylate kinase (Vibrio vulnificus (strain YJ016)).